Here is a 387-residue protein sequence, read N- to C-terminus: MAMAEMATKSSLSAKLTLPSSSTKKTLSLRQVSVSLPTSTSISLLSLFASPPHEAKAAVSIPKDQIVSSLTEVEKTINQVQETGSSVFDATQRVFQVVGDALKPALDTALPIAKQAGEEAMKLASPAFSEASKKAQEAMQSSGFDSEPVFNAAKTVTDVAQQTSKAIEDAKPIASSTMDTISSADPSVIVVAAGAAFLAYLLLPPVFSAISFNFRGYKGDLTPAQTLDLLCTKNYLMVDIRSEKDKEKAGIPRLPSNAKNRVISIPLEELPNKVKGIVRNSKRVEAEIAALKISYLKKINKGSNIIILDSYTDSAKIVAKTLKVLGYKNCYIVTDGFSGGRGWLQSRLGTDSYNFSFAQVLSPSRIIPAASRSFGTRSGTKFLPSSD.

The transit peptide at 1–33 (MAMAEMATKSSLSAKLTLPSSSTKKTLSLRQVS) directs the protein to the chloroplast. The Lumenal, thylakoid segment spans residues 34–186 (VSLPTSTSIS…TMDTISSADP (153 aa)). A helical membrane pass occupies residues 187–207 (SVIVVAAGAAFLAYLLLPPVF). Topologically, residues 208-387 (SAISFNFRGY…SGTKFLPSSD (180 aa)) are stromal. Residues 231 to 352 (CTKNYLMVDI…WLQSRLGTDS (122 aa)) enclose the Rhodanese domain. Position 380 is a phosphothreonine (T380).

In terms of processing, phosphorylation seems to be light-dependent. As to expression, predominantly expressed in the shoot, including guard cells.

The protein resides in the plastid. The protein localises to the chloroplast thylakoid membrane. In terms of biological role, modulates cytoplasmic Ca(2+) concentration and is crucial for proper stomatal regulation in response to elevated levels of external Ca(2+). May function by regulating concentrations of inositol 1,4,5-trisphosphate (IP3), which in turn triggers release of Ca(2+) from internal stores. May play a role in de-etiolation. The chain is Calcium sensing receptor, chloroplastic (CAS) from Arabidopsis thaliana (Mouse-ear cress).